The primary structure comprises 268 residues: Interleukin-1 beta (268 aa).

The propeptide occupies 1–115 (MAAVPDTSDM…DNWDEGYVCD (115 aa)).

Belongs to the IL-1 family. Monomer. In its precursor form, weakly interacts with full-length MEFV; the mature cytokine does not interact at all. Interacts with integrins ITGAV:ITGBV and ITGA5:ITGB1; integrin-binding is required for IL1B signaling. Interacts with cargo receptor TMED10; the interaction is direct and is required for the secretion of IL1B mature form. Interacts with HSP90AB1; the interaction facilitates cargo translocation into the ERGIC. Interacts with HSP90B1; the interaction facilitates cargo translocation into the ERGIC.

The protein resides in the cytoplasm. It localises to the cytosol. The protein localises to the secreted. Its subcellular location is the lysosome. It is found in the extracellular exosome. In terms of biological role, potent pro-inflammatory cytokine. Initially discovered as the major endogenous pyrogen, induces prostaglandin synthesis, neutrophil influx and activation, T-cell activation and cytokine production, B-cell activation and antibody production, and fibroblast proliferation and collagen production. Promotes Th17 differentiation of T-cells. Synergizes with IL12/interleukin-12 to induce IFNG synthesis from T-helper 1 (Th1) cells. Plays a role in angiogenesis by inducing VEGF production synergistically with TNF and IL6. Involved in transduction of inflammation downstream of pyroptosis: its mature form is specifically released in the extracellular milieu by passing through the gasdermin-D (GSDMD) pore. The polypeptide is Interleukin-1 beta (IL1B) (Equus caballus (Horse)).